Consider the following 110-residue polypeptide: Large ribosomal subunit protein uL22 (110 aa).

It belongs to the universal ribosomal protein uL22 family. Part of the 50S ribosomal subunit.

Its function is as follows. This protein binds specifically to 23S rRNA; its binding is stimulated by other ribosomal proteins, e.g. L4, L17, and L20. It is important during the early stages of 50S assembly. It makes multiple contacts with different domains of the 23S rRNA in the assembled 50S subunit and ribosome. The globular domain of the protein is located near the polypeptide exit tunnel on the outside of the subunit, while an extended beta-hairpin is found that lines the wall of the exit tunnel in the center of the 70S ribosome. This chain is Large ribosomal subunit protein uL22, found in Shewanella halifaxensis (strain HAW-EB4).